The primary structure comprises 208 residues: Probable GTP-binding protein EngB (208 aa).

The EngB-type G domain occupies 29–203 (EGREVAFAGR…WDKLGEWLGI (175 aa)). GTP contacts are provided by residues 37-44 (GRSNAGKS), 64-68 (GRTQL), 82-85 (DLPG), 149-152 (TKAD), and 182-184 (FSA). Mg(2+)-binding residues include S44 and T66.

Belongs to the TRAFAC class TrmE-Era-EngA-EngB-Septin-like GTPase superfamily. EngB GTPase family. The cofactor is Mg(2+).

Functionally, necessary for normal cell division and for the maintenance of normal septation. This chain is Probable GTP-binding protein EngB, found in Alcanivorax borkumensis (strain ATCC 700651 / DSM 11573 / NCIMB 13689 / SK2).